The following is a 390-amino-acid chain: Dual-specificity RNA methyltransferase RlmN (390 aa).

Glu110 (proton acceptor) is an active-site residue. The Radical SAM core domain occupies 116-355 (EADRATLCVS…VIIRKTRGDD (240 aa)). Cys123 and Cys360 are joined by a disulfide. 3 residues coordinate [4Fe-4S] cluster: Cys130, Cys134, and Cys137. S-adenosyl-L-methionine-binding positions include 184-185 (GE), Ser216, 238-240 (SLH), and Asn317. The S-methylcysteine intermediate role is filled by Cys360.

Belongs to the radical SAM superfamily. RlmN family. [4Fe-4S] cluster is required as a cofactor.

The protein localises to the cytoplasm. It catalyses the reaction adenosine(2503) in 23S rRNA + 2 reduced [2Fe-2S]-[ferredoxin] + 2 S-adenosyl-L-methionine = 2-methyladenosine(2503) in 23S rRNA + 5'-deoxyadenosine + L-methionine + 2 oxidized [2Fe-2S]-[ferredoxin] + S-adenosyl-L-homocysteine. The catalysed reaction is adenosine(37) in tRNA + 2 reduced [2Fe-2S]-[ferredoxin] + 2 S-adenosyl-L-methionine = 2-methyladenosine(37) in tRNA + 5'-deoxyadenosine + L-methionine + 2 oxidized [2Fe-2S]-[ferredoxin] + S-adenosyl-L-homocysteine. In terms of biological role, specifically methylates position 2 of adenine 2503 in 23S rRNA and position 2 of adenine 37 in tRNAs. m2A2503 modification seems to play a crucial role in the proofreading step occurring at the peptidyl transferase center and thus would serve to optimize ribosomal fidelity. The chain is Dual-specificity RNA methyltransferase RlmN from Haemophilus influenzae (strain 86-028NP).